The primary structure comprises 26 residues: MLKYIYMHLSHKYNHILFTYNTRIIS.

Belongs to the asfivirus E66L family.

This is an uncharacterized protein from Ornithodoros (relapsing fever ticks).